Reading from the N-terminus, the 685-residue chain is Protein SPT2 homolog (685 aa).

The segment at 1-570 is important for interaction with DNA; the sequence is MDFREILMIA…PPLSGYRAAQ (570 aa). Lysine 37 participates in a covalent cross-link: Glycyl lysine isopeptide (Lys-Gly) (interchain with G-Cter in SUMO2). Positions 45–81 form a coiled coil; it reads QAFLKRKEEELRRKALEEKRRKEELVKKRIELKHDKK. A disordered region spans residues 79–168; it reads DKKARAMAKR…PLKSAPPPMN (90 aa). The span at 101-111 shows a compositional bias: basic and acidic residues; sequence IEEKSKKRQAT. The stretch at 123-148 forms a coiled coil; it reads YEMEEENEFLEYNHAESEQEYEEEQE. A Glycyl lysine isopeptide (Lys-Gly) (interchain with G-Cter in SUMO2) cross-link involves residue lysine 187. Basic and acidic residues-rich tracts occupy residues 188–209 and 260–275; these read VVKK…EFLE and HAEK…EKHL. Disordered stretches follow at residues 188-615 and 644-685; these read VVKK…QEEI and SWKE…LKRR. Position 278 is a phosphoserine (serine 278). 3 stretches are compositionally biased toward low complexity: residues 317-330, 365-385, and 402-415; these read SSTS…TSAS, SPGV…PSTG, and GSSS…ISGS. The segment covering 416–431 has biased composition (polar residues); that stretch reads KKPTNDSNPSRRTVSG. A compositionally biased stretch (low complexity) spans 435–501; it reads PGQPASSSGG…PGRSISGSIP (67 aa). The residue at position 471 (serine 471) is a Phosphoserine. Residues 519–529 are compositionally biased toward polar residues; sequence GPGQTVSSSGP. Low complexity predominate over residues 542 to 553; the sequence is ISSKNIISRSSN. The tract at residues 571-685 is important for interaction with histones; sequence GPQRLPFPTG…RRRAKKLKRR (115 aa). Residue lysine 582 is modified to N6-acetyllysine. Acidic residues predominate over residues 587–613; the sequence is YEEEDDDDDEYDSEMEDFIEDEGEPQE. Serine 599 is subject to Phosphoserine. Composition is skewed to basic and acidic residues over residues 644 to 655 and 666 to 676; these read SWKEQQKEEAKS and EMRREEEEMQR. The stretch at 645 to 685 forms a coiled coil; it reads WKEQQKEEAKSLRLGMQEDLEEMRREEEEMQRRRAKKLKRR.

Belongs to the SPT2 family. Interacts with histones. Interacts with a heterotetrameric complex formed by histone H3 and H4, especially when the histone tetramer is not bound to DNA. Interacts with histone H3.3.

It is found in the nucleus. The protein localises to the nucleolus. Its function is as follows. Histone chaperone that stabilizes pre-existing histone tetramers and regulates replication-independent histone exchange on chromatin. Required for normal chromatin refolding in the coding region of transcribed genes, and for the suppression of spurious transcription. Binds DNA and histones and promotes nucleosome assembly (in vitro). Facilitates formation of tetrameric histone complexes containing histone H3 and H4. Modulates RNA polymerase 1-mediated transcription. Binds DNA, with a preference for branched DNA species, such as Y-form DNA and Holliday junction DNA. The polypeptide is Protein SPT2 homolog (SPTY2D1) (Homo sapiens (Human)).